We begin with the raw amino-acid sequence, 188 residues long: Pterocarpan synthase 1 (188 aa).

Residues M1–A23 form the signal peptide. A glycan (N-linked (GlcNAc...) asparagine) is linked at N127.

It belongs to the plant dirigent protein family. Homodimer.

Its subcellular location is the secreted. It localises to the extracellular space. The protein resides in the apoplast. The enzyme catalyses a (4R)-4,2'-dihydroxyisoflavan = a pterocarpan + H2O.. The catalysed reaction is (3R,4R)-7,2'-dihydroxy-4'-methoxyisoflavanol = (-)-medicarpin + H2O. It carries out the reaction (3S,4R)-7,2'-dihydroxy-4'-methoxyisoflavanol = (+)-medicarpin + H2O. It catalyses the reaction (3R,4R)-3-(6-hydroxy-1,3-benzodioxol-5-yl)-3,4-dihydro-2H-chromene-4,7-diol = (-)-maackiain + H2O. The enzyme catalyses (3R,4R)-7,2',4'-trihydroxyisoflavanol = (6aR,11aR)-3,9-dihydroxypterocarpan + H2O. Functionally, involved in pterocarpan phytoalexin biosynthesis. Catalyzes the last step in the biosynthesis of the phytoalexin medicarpin, and thereby contributes to plant defense reactions. Dirigent proteins impart stereoselectivity on the phenoxy radical-coupling reaction, yielding optically active lignans from two molecules of coniferyl alcohol in the biosynthesis of lignans, flavonolignans, and alkaloids and thus plays a central role in plant secondary metabolism. The polypeptide is Pterocarpan synthase 1 (Glycyrrhiza echinata (Licorice)).